A 357-amino-acid polypeptide reads, in one-letter code: Ribosomal RNA large subunit methyltransferase M (357 aa).

Residues Ser-183, 216 to 219, Asp-235, Asp-255, and Asp-271 each bind S-adenosyl-L-methionine; that span reads APGG. Catalysis depends on Lys-300, which acts as the Proton acceptor.

This sequence belongs to the class I-like SAM-binding methyltransferase superfamily. RNA methyltransferase RlmE family. RlmM subfamily. Monomer.

The protein resides in the cytoplasm. The catalysed reaction is cytidine(2498) in 23S rRNA + S-adenosyl-L-methionine = 2'-O-methylcytidine(2498) in 23S rRNA + S-adenosyl-L-homocysteine + H(+). In terms of biological role, catalyzes the 2'-O-methylation at nucleotide C2498 in 23S rRNA. In Pseudomonas fluorescens (strain ATCC BAA-477 / NRRL B-23932 / Pf-5), this protein is Ribosomal RNA large subunit methyltransferase M.